A 307-amino-acid chain; its full sequence is MLKQEDILQDLKSLIPEDIIKVNEPLKRYTYTETGGNADFYLSPTKNEDVQAIVRYAKEKDIPVTYLGNGSNIIIREGGIRGIVISLLSLNHINVSDDAIIAGSGSAIIDVSRAARDHVLTGLEFACGIPGSVGGAVYMNAGAYGGEIKDCIDYALCVNEEGDLIQFTNKELELDYRNSIVQKQHLVVLEAAFTLEPGKLDEIQAKMDDLTERRESKQPLEYPSCGSVFQRPPGHFAGKLIQDSDLQGYRVGGVEVSKKHAGFMVNVDNGTATDYEDLIHHVQKVVKEKFDVELHREVRIIGEHPKE.

In terms of domain architecture, FAD-binding PCMH-type spans 34-198; sequence TGGNADFYLS…LEAAFTLEPG (165 aa). The active site involves R177. The Proton donor role is filled by S227. The active site involves E297.

This sequence belongs to the MurB family. It depends on FAD as a cofactor.

The protein resides in the cytoplasm. The enzyme catalyses UDP-N-acetyl-alpha-D-muramate + NADP(+) = UDP-N-acetyl-3-O-(1-carboxyvinyl)-alpha-D-glucosamine + NADPH + H(+). Its pathway is cell wall biogenesis; peptidoglycan biosynthesis. Functionally, cell wall formation. The sequence is that of UDP-N-acetylenolpyruvoylglucosamine reductase from Staphylococcus haemolyticus (strain JCSC1435).